The chain runs to 116 residues: NADPH-dependent 7-cyano-7-deazaguanine reductase (116 aa).

Cysteine 31 acts as the Thioimide intermediate in catalysis. Aspartate 38 acts as the Proton donor in catalysis. Residues valine 53–leucine 55 and tyrosine 72–glutamate 73 each bind substrate.

It belongs to the GTP cyclohydrolase I family. QueF type 1 subfamily.

It localises to the cytoplasm. It carries out the reaction 7-aminomethyl-7-carbaguanine + 2 NADP(+) = 7-cyano-7-deazaguanine + 2 NADPH + 3 H(+). It participates in tRNA modification; tRNA-queuosine biosynthesis. In terms of biological role, catalyzes the NADPH-dependent reduction of 7-cyano-7-deazaguanine (preQ0) to 7-aminomethyl-7-deazaguanine (preQ1). The protein is NADPH-dependent 7-cyano-7-deazaguanine reductase of Chlorobium phaeovibrioides (strain DSM 265 / 1930) (Prosthecochloris vibrioformis (strain DSM 265)).